A 109-amino-acid polypeptide reads, in one-letter code: Prefoldin subunit 1 (109 aa).

At S2 the chain carries N-acetylserine.

Belongs to the prefoldin subunit beta family. In terms of assembly, heterohexamer of two PFD-alpha type and four PFD-beta type subunits.

Its subcellular location is the cytoplasm. In terms of biological role, binds specifically to cytosolic chaperonin (c-CPN) and transfers target proteins to it. Binds to nascent polypeptide chain and promotes folding in an environment in which there are many competing pathways for nonnative proteins. The chain is Prefoldin subunit 1 (PFD1) from Saccharomyces cerevisiae (strain ATCC 204508 / S288c) (Baker's yeast).